Consider the following 159-residue polypeptide: NADH-quinone oxidoreductase subunit I (159 aa).

4Fe-4S ferredoxin-type domains follow at residues 51-80 (RRYE…IEAD) and 90-119 (TRYD…EGPN). 8 residues coordinate [4Fe-4S] cluster: cysteine 60, cysteine 63, cysteine 66, cysteine 70, cysteine 99, cysteine 102, cysteine 105, and cysteine 109.

Belongs to the complex I 23 kDa subunit family. In terms of assembly, NDH-1 is composed of 14 different subunits. Subunits NuoA, H, J, K, L, M, N constitute the membrane sector of the complex. The cofactor is [4Fe-4S] cluster.

The protein resides in the cell inner membrane. It catalyses the reaction a quinone + NADH + 5 H(+)(in) = a quinol + NAD(+) + 4 H(+)(out). In terms of biological role, NDH-1 shuttles electrons from NADH, via FMN and iron-sulfur (Fe-S) centers, to quinones in the respiratory chain. The immediate electron acceptor for the enzyme in this species is believed to be ubiquinone. Couples the redox reaction to proton translocation (for every two electrons transferred, four hydrogen ions are translocated across the cytoplasmic membrane), and thus conserves the redox energy in a proton gradient. In Rickettsia akari (strain Hartford), this protein is NADH-quinone oxidoreductase subunit I.